A 685-amino-acid chain; its full sequence is Beta-taxilin (685 aa).

Positions 1–135 (MEINHPDQLS…KEPVSNKEQK (135 aa)) are disordered. Residues 18-28 (GDSSSLNQNGP) are compositionally biased toward polar residues. Composition is skewed to basic and acidic residues over residues 47–67 (GSLHPEKGAHDVAEELSRQLE) and 80–90 (RGKESTSETKE). A compositionally biased stretch (acidic residues) spans 98–113 (PDNEDVDYEETTEEID). Coiled coils occupy residues 138-354 (KKIL…VLKE) and 381-470 (NEVF…SEKE). The span at 465 to 478 (KMSEKEDQVQRTSE) shows a compositional bias: basic and acidic residues. 2 disordered regions span residues 465–497 (KMSEKEDQVQRTSEEEPEPSVSENEEVDAEEAN) and 517–685 (EFTP…NGVD). Phosphoserine is present on residues serine 477, serine 484, and serine 486. Over residues 479-495 (EEPEPSVSENEEVDAEE) the composition is skewed to acidic residues. The segment covering 575–591 (CEATPAPTASCTPAEAE) has biased composition (low complexity). Residues 612–627 (ANTSGQAPLSPAQGSL) are compositionally biased toward polar residues.

It belongs to the taxilin family. In terms of assembly, binds to the C-terminal coiled coil region of syntaxin family members STX1A, STX3A and STX4A. Has a preference for STX1A. Specifically expressed in skeletal muscle.

In terms of biological role, promotes motor nerve regeneration. May be involved in intracellular vesicle traffic. The chain is Beta-taxilin (Txlnb) from Mus musculus (Mouse).